The chain runs to 178 residues: FMN reductase (NADH) RutF (178 aa).

The protein belongs to the non-flavoprotein flavin reductase family. RutF subfamily.

It catalyses the reaction FMNH2 + NAD(+) = FMN + NADH + 2 H(+). Its function is as follows. Catalyzes the reduction of FMN to FMNH2 which is used to reduce pyrimidine by RutA via the Rut pathway. This Pseudomonas syringae pv. syringae (strain B728a) protein is FMN reductase (NADH) RutF.